The following is a 71-amino-acid chain: Movement protein TGBp3 (71 aa).

Residues 1–4 lie on the Lumenal side of the membrane; the sequence is MWSD. A helical membrane pass occupies residues 5-27; that stretch reads SLVSRICVPIIVVCTSIALLNVV. Residues 28–71 are Cytoplasmic-facing; sequence SFRSECSCVVHISGAAIDIRGCSFTPDFIEYAKTLRVFNHRYQE.

This sequence belongs to the Tymovirales TGBp3 protein family.

It is found in the host endoplasmic reticulum membrane. Plays a role in viral cell-to-cell propagation, by facilitating genome transport to neighboring plant cells through plasmosdesmata. May induce the formation of granular vesicles derived from the Endoplasmic reticulum, which align on actin filaments. The chain is Movement protein TGBp3 from Populus balsamifera (Balsam poplar).